The following is a 678-amino-acid chain: DNA ligase (678 aa).

Residues 36–40, 85–86, and E117 contribute to the NAD(+) site; these read DAEYD and SL. K119 functions as the N6-AMP-lysine intermediate in the catalytic mechanism. NAD(+) contacts are provided by R140, E177, K294, and K318. Positions 412, 415, 430, and 436 each coordinate Zn(2+). The 84-residue stretch at 595 to 678 folds into the BRCT domain; it reads ADEQPLNGQT…NLLREHGIEV (84 aa).

Belongs to the NAD-dependent DNA ligase family. LigA subfamily. The cofactor is Mg(2+). It depends on Mn(2+) as a cofactor.

The catalysed reaction is NAD(+) + (deoxyribonucleotide)n-3'-hydroxyl + 5'-phospho-(deoxyribonucleotide)m = (deoxyribonucleotide)n+m + AMP + beta-nicotinamide D-nucleotide.. Functionally, DNA ligase that catalyzes the formation of phosphodiester linkages between 5'-phosphoryl and 3'-hydroxyl groups in double-stranded DNA using NAD as a coenzyme and as the energy source for the reaction. It is essential for DNA replication and repair of damaged DNA. The chain is DNA ligase from Marinobacter nauticus (strain ATCC 700491 / DSM 11845 / VT8) (Marinobacter aquaeolei).